The primary structure comprises 185 residues: Ribosome-recycling factor (185 aa).

The protein belongs to the RRF family.

The protein localises to the cytoplasm. In terms of biological role, responsible for the release of ribosomes from messenger RNA at the termination of protein biosynthesis. May increase the efficiency of translation by recycling ribosomes from one round of translation to another. The protein is Ribosome-recycling factor of Corynebacterium diphtheriae (strain ATCC 700971 / NCTC 13129 / Biotype gravis).